Reading from the N-terminus, the 463-residue chain is tRNA modification GTPase MnmE (463 aa).

Residues arginine 29, glutamate 91, and arginine 130 each coordinate (6S)-5-formyl-5,6,7,8-tetrahydrofolate. A TrmE-type G domain is found at glycine 225–glutamine 384. Asparagine 235 is a K(+) binding site. Residues asparagine 235 to serine 240, threonine 254 to threonine 260, and aspartate 279 to glycine 282 contribute to the GTP site. Serine 239 is a binding site for Mg(2+). Residues threonine 254, leucine 256, and threonine 259 each contribute to the K(+) site. A Mg(2+)-binding site is contributed by threonine 260. Residue lysine 463 participates in (6S)-5-formyl-5,6,7,8-tetrahydrofolate binding.

It belongs to the TRAFAC class TrmE-Era-EngA-EngB-Septin-like GTPase superfamily. TrmE GTPase family. In terms of assembly, homodimer. Heterotetramer of two MnmE and two MnmG subunits. K(+) is required as a cofactor.

It is found in the cytoplasm. Exhibits a very high intrinsic GTPase hydrolysis rate. Involved in the addition of a carboxymethylaminomethyl (cmnm) group at the wobble position (U34) of certain tRNAs, forming tRNA-cmnm(5)s(2)U34. The protein is tRNA modification GTPase MnmE of Trichormus variabilis (strain ATCC 29413 / PCC 7937) (Anabaena variabilis).